The following is a 474-amino-acid chain: MFS transporter SAT21 (474 aa).

Transmembrane regions (helical) follow at residues 7–27 (LVLPFILYLLFRLSHFLLEVP), 64–84 (LVVGWKMTFDSIPGLMSILYF), 101–121 (CVGYLLAILWVLITCLFHQVF), 131–151 (LFLFIGGGQLVFAAVITAFVA), 162–182 (FLFLLAAMPHMDKVASPALAT), and 189–209 (LFLPSLVSMAIVVICVALLQM). Residues 220 to 252 (KVVGSTSDQTEPFLRSSSNSSQESGTAAPAIDP) are disordered. Residues 222 to 244 (VGSTSDQTEPFLRSSSNSSQESG) show a composition bias toward polar residues. Asparagine 238 is a glycosylation site (N-linked (GlcNAc...) asparagine). The next 6 helical transmembrane spans lie at 276–296 (FICYLCFFLKSNAMASEAFIF), 315–335 (LALSSGAVISTLIICPLANAT), 346–366 (INIGAVHASSIVLVASFIMAW), 374–394 (FIFSMLAAGFGEGLEPALQGV), 406–426 (SIFALMCTCSLLGDMTGGPLM), and 445–465 (FLASALVFGAVIVLAHLLWAL).

The protein belongs to the major facilitator superfamily.

Its subcellular location is the cell membrane. In terms of biological role, MFS transporter; part of the satratoxin SC3 cluster involved in the biosynthesis of satratoxins, trichothecene mycotoxins that are associated with human food poisonings. Satratoxins are suggested to be made by products of multiple gene clusters (SC1, SC2 and SC3) that encode 21 proteins in all, including polyketide synthases, acetyltransferases, and other enzymes expected to modify the trichothecene skeleton. SC1 encodes 10 proteins, SAT1 to SAT10. The largest are SAT8, which encodes a putative polyketide synthase (PKS) with a conventional non-reducing architecture, and SAT10, a putative protein containing four ankyrin repeats and thus may be involved in protein scaffolding. The putative short-chain reductase SAT3 may assist the PKS in some capacity. SAT6 contains a secretory lipase domain and acts probably as a trichothecene esterase. SAT5 encodes a putative acetyltransferase, and so, with SAT6, may affect endogenous protection from toxicity. The probable transcription factor SAT9 may regulate the expression of the SC1 cluster. SC2 encodes proteins SAT11 to SAT16, the largest of which encodes the putative reducing PKS SAT13. SAT11 is a cytochrome P450 monooxygenase, while SAT14 and SAT16 are probable acetyltransferases. The SC2 cluster may be regulated by the transcription factor SAT15. SC3 is a small cluster that encodes 5 proteins, SAT17 to SAT21. SAT21 is a putative MFS-type transporter which may have a role in exporting secondary metabolites. The four other proteins putatively encoded in SC3 include the taurine hydroxylase-like protein SAT17, the O-methyltransferase SAT18, the acetyltransferase SAT19, and the Cys6-type zinc finger SAT20, the latter being probably involved in regulation of SC3 expression. This chain is MFS transporter SAT21, found in Stachybotrys chartarum (strain CBS 109288 / IBT 7711) (Toxic black mold).